Consider the following 192-residue polypeptide: Putative B3 domain-containing protein At4g03160 (192 aa).

The segment at 22–44 is disordered; the sequence is VFFDQEEEEEDEEEEYDEESVCE. A compositionally biased stretch (acidic residues) spans 25-44; it reads DQEEEEEDEEEEYDEESVCE. The TF-B3 DNA-binding region spans 75 to 173; that stretch reads KDNQYRLMLG…EICFAIDSTR (99 aa).

It localises to the nucleus. The protein is Putative B3 domain-containing protein At4g03160 of Arabidopsis thaliana (Mouse-ear cress).